A 373-amino-acid chain; its full sequence is Histidinol-phosphate aminotransferase (373 aa).

An N6-(pyridoxal phosphate)lysine modification is found at Lys-233.

It belongs to the class-II pyridoxal-phosphate-dependent aminotransferase family. Histidinol-phosphate aminotransferase subfamily. Homodimer. It depends on pyridoxal 5'-phosphate as a cofactor.

It catalyses the reaction L-histidinol phosphate + 2-oxoglutarate = 3-(imidazol-4-yl)-2-oxopropyl phosphate + L-glutamate. Its pathway is amino-acid biosynthesis; L-histidine biosynthesis; L-histidine from 5-phospho-alpha-D-ribose 1-diphosphate: step 7/9. This is Histidinol-phosphate aminotransferase from Nitratidesulfovibrio vulgaris (strain DP4) (Desulfovibrio vulgaris).